A 270-amino-acid polypeptide reads, in one-letter code: Type III pantothenate kinase (270 aa).

19–26 (DIGNTSTT) is an ATP binding site. Substrate contacts are provided by residues Tyr-109 and 116–119 (GADR). Asp-118 (proton acceptor) is an active-site residue. Asp-139 is a binding site for K(+). Thr-142 provides a ligand contact to ATP. Residue Thr-194 coordinates substrate.

The protein belongs to the type III pantothenate kinase family. As to quaternary structure, homodimer. NH4(+) serves as cofactor. The cofactor is K(+).

It is found in the cytoplasm. It catalyses the reaction (R)-pantothenate + ATP = (R)-4'-phosphopantothenate + ADP + H(+). It participates in cofactor biosynthesis; coenzyme A biosynthesis; CoA from (R)-pantothenate: step 1/5. Catalyzes the phosphorylation of pantothenate (Pan), the first step in CoA biosynthesis. This chain is Type III pantothenate kinase, found in Chlorobaculum tepidum (strain ATCC 49652 / DSM 12025 / NBRC 103806 / TLS) (Chlorobium tepidum).